The following is a 181-amino-acid chain: ATP synthase subunit delta (181 aa).

The protein belongs to the ATPase delta chain family. In terms of assembly, F-type ATPases have 2 components, F(1) - the catalytic core - and F(0) - the membrane proton channel. F(1) has five subunits: alpha(3), beta(3), gamma(1), delta(1), epsilon(1). F(0) has three main subunits: a(1), b(2) and c(10-14). The alpha and beta chains form an alternating ring which encloses part of the gamma chain. F(1) is attached to F(0) by a central stalk formed by the gamma and epsilon chains, while a peripheral stalk is formed by the delta and b chains.

It localises to the cell membrane. F(1)F(0) ATP synthase produces ATP from ADP in the presence of a proton or sodium gradient. F-type ATPases consist of two structural domains, F(1) containing the extramembraneous catalytic core and F(0) containing the membrane proton channel, linked together by a central stalk and a peripheral stalk. During catalysis, ATP synthesis in the catalytic domain of F(1) is coupled via a rotary mechanism of the central stalk subunits to proton translocation. In terms of biological role, this protein is part of the stalk that links CF(0) to CF(1). It either transmits conformational changes from CF(0) to CF(1) or is implicated in proton conduction. This is ATP synthase subunit delta from Mycoplasma capricolum subsp. capricolum (strain California kid / ATCC 27343 / NCTC 10154).